A 391-amino-acid polypeptide reads, in one-letter code: Putative penicillin-binding protein PbpX (391 aa).

A helical membrane pass occupies residues 21 to 40 (GKLLFGLLAVMVCITIWNAL). The disordered stretch occupies residues 44–76 (SEENEPSQETAAVSNTDQKKEVKKKTAKKSEEQ). Polar residues predominate over residues 50 to 59 (SQETAAVSNT).

It belongs to the beta-lactamase family.

Its subcellular location is the cell membrane. This chain is Putative penicillin-binding protein PbpX (pbpX), found in Bacillus subtilis (strain 168).